The chain runs to 302 residues: Uricase (302 aa).

N-acetylserine is present on Ser-2. Active-site charge relay system residues include Lys-11 and Thr-58. 5-hydroxyisourate contacts are provided by Thr-58, Asp-59, Phe-160, Arg-177, Val-228, Gln-229, and Asn-255. Thr-58 contacts O2. Positions 58, 59, 160, 177, 228, 229, and 255 each coordinate urate. Residue Asn-255 participates in O2 binding. Catalysis depends on His-257, which acts as the Charge relay system. A Microbody targeting signal motif is present at residues 300–302 (SKL).

This sequence belongs to the uricase family. Homotetramer.

It is found in the peroxisome. It catalyses the reaction urate + O2 + H2O = 5-hydroxyisourate + H2O2. It functions in the pathway purine metabolism; urate degradation; (S)-allantoin from urate: step 1/3. With respect to regulation, 8-Azaxanthine is one of the most potent competitive inhibitors of uricase activity. Hypoxanthine has only a small inhibitor effect, and caffeine has no effect at all. Azide not only competes with dioxygen but also competes with the substrate for its enzymatic site. Urate oxidase is a cofactorless enzyme involved in the metabolism of purines. Catalyzes, in the presence of molecular oxygen, the hydroxylation of uric acid to metastable 5-hydroxyisourate (5-HIU) which is further degraded to allantoin. In Aspergillus flavus, this protein is Uricase.